The sequence spans 727 residues: 1,4-alpha-glucan branching enzyme GlgB (727 aa).

The Nucleophile role is filled by D405. Residue E458 is the Proton donor of the active site.

This sequence belongs to the glycosyl hydrolase 13 family. GlgB subfamily. In terms of assembly, monomer.

It catalyses the reaction Transfers a segment of a (1-&gt;4)-alpha-D-glucan chain to a primary hydroxy group in a similar glucan chain.. The protein operates within glycan biosynthesis; glycogen biosynthesis. Catalyzes the formation of the alpha-1,6-glucosidic linkages in glycogen by scission of a 1,4-alpha-linked oligosaccharide from growing alpha-1,4-glucan chains and the subsequent attachment of the oligosaccharide to the alpha-1,6 position. The chain is 1,4-alpha-glucan branching enzyme GlgB from Yersinia pestis bv. Antiqua (strain Antiqua).